A 117-amino-acid chain; its full sequence is Transcription elongation factor SPT4 (117 aa).

The interaction with SUPT5H stretch occupies residues 1-40 (MSLETVPKDLRHLRACLLCSLVKTIDQFEYDGCDNCESYL). The segment at 16–36 (CLLCSLVKTIDQFEYDGCDNC) adopts a C4-type zinc-finger fold.

The protein belongs to the SPT4 family. Interacts with SUPT5H to form the DSIF complex. DSIF interacts with RNA polymerase II and with the positive transcription elongation factor b complex (P-TEFb complex), which is composed of CDK9 and cyclin-T.

Its subcellular location is the nucleus. Functionally, may function as a component of the DRB sensitivity-inducing factor complex (DSIF complex), which regulates transcription elongation by RNA polymerase II. Probably enhances transcriptional pausing at sites proximal to the promoter, which may facilitate the assembly of an elongation competent RNA polymerase II complex. Also acts to stimulate transcriptional elongation at low nucleotide concentrations. Regulation of transcriptional elongation by this protein is required for the expression of genes which control neuronal development. In Danio rerio (Zebrafish), this protein is Transcription elongation factor SPT4 (supt4h1).